Here is a 616-residue protein sequence, read N- to C-terminus: MAU2 chromatid cohesion factor homolog (616 aa).

TPR repeat units follow at residues 90–123 (FDTA…SQHN), 445–478 (GSFY…ANAE), and 485–518 (SCSL…ASKI).

Belongs to the SCC4/mau-2 family. As to quaternary structure, component of the cohesin loading complex.

Its subcellular location is the nucleus. It is found in the nucleoplasm. Required for association of the cohesin complex with chromatin during interphase. Plays a role in sister chromatid cohesion and normal progression through prometaphase. The chain is MAU2 chromatid cohesion factor homolog from Culex quinquefasciatus (Southern house mosquito).